A 229-amino-acid chain; its full sequence is Adenine nucleotide translocase lysine N-methyltransferase (229 aa).

The N-terminal sequence (NTS) stretch occupies residues 1-22 (MDQDDPAEALTELREKRLGLLE). Residues 20-42 (LLEIVQAAAGSGLAVYTIWALLL) traverse the membrane as a helical segment. The tract at residues 43–77 (QPGFRRVPLRLQVPYVGASARQVENVLSLLRGRPG) is methyltransferase (MTase). Residues 43-77 (QPGFRRVPLRLQVPYVGASARQVENVLSLLRGRPG) form a pre-methyltransferase (preMT) region.

This sequence belongs to the ANT/ATPSC lysine N-methyltransferase family.

Its subcellular location is the mitochondrion membrane. The enzyme catalyses L-lysyl-[protein] + 3 S-adenosyl-L-methionine = N(6),N(6),N(6)-trimethyl-L-lysyl-[protein] + 3 S-adenosyl-L-homocysteine + 3 H(+). Functionally, mitochondrial protein-lysine N-methyltransferase that trimethylates adenine nucleotide translocases ANT2/SLC25A5 and ANT3/SLC25A6, thereby regulating mitochondrial respiration. Probably also trimethylates ANT1/SLC25A4. This Mus musculus (Mouse) protein is Adenine nucleotide translocase lysine N-methyltransferase.